A 368-amino-acid chain; its full sequence is Phosphoserine aminotransferase (368 aa).

R42 contacts L-glutamate. Pyridoxal 5'-phosphate contacts are provided by W101, T151, D175, and Q198. K199 carries the N6-(pyridoxal phosphate)lysine modification. 240-241 (NT) lines the pyridoxal 5'-phosphate pocket.

This sequence belongs to the class-V pyridoxal-phosphate-dependent aminotransferase family. SerC subfamily. As to quaternary structure, homodimer. Requires pyridoxal 5'-phosphate as cofactor.

It localises to the cytoplasm. The catalysed reaction is O-phospho-L-serine + 2-oxoglutarate = 3-phosphooxypyruvate + L-glutamate. The enzyme catalyses 4-(phosphooxy)-L-threonine + 2-oxoglutarate = (R)-3-hydroxy-2-oxo-4-phosphooxybutanoate + L-glutamate. Its pathway is amino-acid biosynthesis; L-serine biosynthesis; L-serine from 3-phospho-D-glycerate: step 2/3. The protein operates within cofactor biosynthesis; pyridoxine 5'-phosphate biosynthesis; pyridoxine 5'-phosphate from D-erythrose 4-phosphate: step 3/5. In terms of biological role, catalyzes the reversible conversion of 3-phosphohydroxypyruvate to phosphoserine and of 3-hydroxy-2-oxo-4-phosphonooxybutanoate to phosphohydroxythreonine. The protein is Phosphoserine aminotransferase of Polaromonas sp. (strain JS666 / ATCC BAA-500).